Consider the following 249-residue polypeptide: Metallo-beta-lactamase type 2 (249 aa).

Positions Met1–Gly22 are cleaved as a signal peptide. 5 residues coordinate Zn(2+): His98, His100, Asp102, His161, and Cys180. Substrate is bound at residue Lys183. His222 serves as a coordination point for Zn(2+).

It belongs to the metallo-beta-lactamase superfamily. Class-B beta-lactamase family. Monomer. Zn(2+) is required as a cofactor.

It localises to the periplasm. It catalyses the reaction a beta-lactam + H2O = a substituted beta-amino acid. Confers resistance to the different beta-lactams antibiotics (penicillin, cephalosporin and carbapenem) via the hydrolysis of the beta-lactam ring. This chain is Metallo-beta-lactamase type 2 (blaB4), found in Elizabethkingia meningoseptica (Chryseobacterium meningosepticum).